The sequence spans 158 residues: Large ribosomal subunit protein uL11 (158 aa).

The tract at residues methionine 1 to proline 28 is disordered.

It belongs to the universal ribosomal protein uL11 family. As to quaternary structure, part of the ribosomal stalk of the 50S ribosomal subunit. Interacts with L10 and the large rRNA to form the base of the stalk. L10 forms an elongated spine to which L12 dimers bind in a sequential fashion forming a multimeric L10(L12)X complex.

In terms of biological role, forms part of the ribosomal stalk which helps the ribosome interact with GTP-bound translation factors. The sequence is that of Large ribosomal subunit protein uL11 from Halorubrum lacusprofundi (strain ATCC 49239 / DSM 5036 / JCM 8891 / ACAM 34).